A 310-amino-acid polypeptide reads, in one-letter code: Ribosomal RNA small subunit methyltransferase H (310 aa).

Residues 35 to 37, D52, F79, D100, and Q107 each bind S-adenosyl-L-methionine; that span reads GGH.

The protein belongs to the methyltransferase superfamily. RsmH family.

It is found in the cytoplasm. It catalyses the reaction cytidine(1402) in 16S rRNA + S-adenosyl-L-methionine = N(4)-methylcytidine(1402) in 16S rRNA + S-adenosyl-L-homocysteine + H(+). Specifically methylates the N4 position of cytidine in position 1402 (C1402) of 16S rRNA. This is Ribosomal RNA small subunit methyltransferase H from Anaeromyxobacter sp. (strain Fw109-5).